Reading from the N-terminus, the 1458-residue chain is Phospholipase B1, membrane-associated (1458 aa).

A signal peptide spans 1 to 21 (MGLRPGIFLLELLLLLGQGTP). Residues 22–1417 (QIHTSPRKST…QAEEAPEVLY (1396 aa)) lie on the Extracellular side of the membrane. Repeat copies occupy residues 39 to 347 (ETLK…YRNS), 362 to 707 (VREG…YKNS), and 708 to 1054 (MQGH…PRNS). The tract at residues 39–1402 (ETLKNSPFPC…SPYLYTLRNS (1364 aa)) is 4 X 308-326 AA approximate repeats. N-linked (GlcNAc...) asparagine glycosylation is found at asparagine 173 and asparagine 240. Serine 400 is an active-site residue. Asparagine 493 carries an N-linked (GlcNAc...) asparagine glycan. Aspartate 514 is an active-site residue. N-linked (GlcNAc...) asparagine glycans are attached at residues asparagine 529 and asparagine 590. Residue histidine 655 is part of the active site. N-linked (GlcNAc...) asparagine glycans are attached at residues asparagine 690, asparagine 783, asparagine 797, asparagine 809, asparagine 1055, asparagine 1113, asparagine 1275, and asparagine 1378. Copy 4 of the repeat occupies 1064–1402 (IENWGSDFLC…SPYLYTLRNS (339 aa)). The necessary for membrane localization stretch occupies residues 1403–1445 (RLLPDQAEEAPEVLYWAVPVAAGVGLVVGIIGTVVWRCRRGGR). Residues 1418-1438 (WAVPVAAGVGLVVGIIGTVVW) form a helical membrane-spanning segment. Topologically, residues 1439–1458 (RCRRGGRREDPPMSLRTVAL) are cytoplasmic.

It belongs to the 'GDSL' lipolytic enzyme family. Phospholipase B1 subfamily. In terms of processing, undergoes proteolytic cleavage in the ileum. As to expression, expressed in the epidermis (at protein level).

The protein localises to the apical cell membrane. The catalysed reaction is a 1,2-diacyl-sn-glycero-3-phosphocholine + H2O = a 1-acyl-sn-glycero-3-phosphocholine + a fatty acid + H(+). It carries out the reaction a 1-O-alkyl-2-acyl-sn-glycero-3-phosphocholine + H2O = a 1-O-alkyl-sn-glycero-3-phosphocholine + a fatty acid + H(+). It catalyses the reaction a 1-acyl-sn-glycero-3-phosphocholine + H2O = sn-glycerol 3-phosphocholine + a fatty acid + H(+). The enzyme catalyses a triacylglycerol + H2O = a diacylglycerol + a fatty acid + H(+). The catalysed reaction is 1,2-dihexadecanoyl-sn-glycero-3-phosphocholine + H2O = 1-hexadecanoyl-sn-glycero-3-phosphocholine + hexadecanoate + H(+). It carries out the reaction 1-hexadecanoyl-2-(9Z-octadecenoyl)-sn-glycero-3-phosphocholine + H2O = 1-hexadecanoyl-sn-glycero-3-phosphocholine + (9Z)-octadecenoate + H(+). It catalyses the reaction 1,2-di-(9Z-octadecenoyl)-sn-glycero-3-phosphocholine + H2O = 1-(9Z-octadecenoyl)-sn-glycero-3-phosphocholine + (9Z)-octadecenoate + H(+). The enzyme catalyses 1-hexadecanoyl-2-(9Z,12Z-octadecadienoyl)-sn-glycero-3-phosphocholine + H2O = (9Z,12Z)-octadecadienoate + 1-hexadecanoyl-sn-glycero-3-phosphocholine + H(+). The catalysed reaction is 1-hexadecanoyl-2-(9Z,12Z-octadecadienoyl)-sn-glycero-3-phosphocholine + H2O = 2-(9Z,12Z-octadecadienoyl)-sn-glycero-3-phosphocholine + hexadecanoate + H(+). It carries out the reaction 1-hexadecanoyl-2-(9Z-octadecenoyl)-sn-glycero-3-phosphoethanolamine + H2O = 1-hexadecanoyl-sn-glycero-3-phosphoethanolamine + (9Z)-octadecenoate + H(+). It catalyses the reaction 1-hexadecanoyl-2-(9Z-octadecenoyl)-sn-glycero-3-phospho-(1'-sn-glycerol) + H2O = 1-hexadecanoyl-sn-glycero-3-phospho-(1'-sn-glycerol) + (9Z)-octadecenoate + H(+). The enzyme catalyses 1,2-dihexadecanoyl-sn-glycero-3-phosphocholine + 2 H2O = sn-glycerol 3-phosphocholine + 2 hexadecanoate + 2 H(+). The catalysed reaction is 1-O-hexadecyl-2-(9Z)-octadecenoyl-sn-glycero-3-phosphocholine + H2O = 1-O-hexadecyl-sn-glycero-3-phosphocholine + (9Z)-octadecenoate + H(+). It carries out the reaction 1-hexadecanoyl-sn-glycero-3-phosphocholine + H2O = sn-glycerol 3-phosphocholine + hexadecanoate + H(+). It catalyses the reaction 1,2,3-tri-(9Z-octadecenoyl)-glycerol + H2O = di-(9Z)-octadecenoylglycerol + (9Z)-octadecenoate + H(+). The enzyme catalyses 1-hexadecanoyl-2-(9Z)-octadecenoyl-3-octadecanoyl-sn-glycerol + H2O = 1-hexadecanoyl-2-(9Z-octadecenoyl)-sn-glycerol + octadecanoate + H(+). The catalysed reaction is 1,3-dihexadecanoyl-2-(9Z-octadecenoyl)glycerol + H2O = 1,3-dihexadecanoylglycerol + (9Z)-octadecenoate + H(+). It carries out the reaction 1,3-dihexadecanoyl-2-(9Z-octadecenoyl)glycerol + H2O = 1-hexadecanoyl-2-(9Z-octadecenoyl)-glycerol + hexadecanoate + H(+). It catalyses the reaction 1-hexadecanoyl-2-(9Z)-octadecenoyl-3-octadecanoyl-sn-glycerol + H2O = 1-hexadecanoyl-3-octadecanoyl-sn-glycerol + (9Z)-octadecenoate + H(+). The enzyme catalyses 1-hexadecanoyl-2-(9Z)-octadecenoyl-3-octadecanoyl-sn-glycerol + H2O = 2-(9Z-octadecenoyl)-3-octadecanoyl-sn-glycerol + hexadecanoate + H(+). The catalysed reaction is 1-octadecanoyl-2-(9Z,12Z)-octadecadienoyl-sn-glycerol + H2O = 1-octadecanoyl-sn-glycerol + (9Z,12Z)-octadecadienoate + H(+). It carries out the reaction 1,2-di-(9Z-octadecenoyl)-sn-glycerol + H2O = 1-(9Z-octadecenoyl)-sn-glycerol + (9Z)-octadecenoate + H(+). It catalyses the reaction 2,3-di-(9Z)-octadecenoyl-sn-glycerol + H2O = 3-(9Z-octadecenoyl)-sn-glycerol + (9Z)-octadecenoate + H(+). The enzyme catalyses 1,3-di-(9Z-octadecenoyl)-glycerol + H2O = 1-(9Z-octadecenoyl)-glycerol + (9Z)-octadecenoate + H(+). The catalysed reaction is 1-(9Z-octadecenoyl)-glycerol + H2O = glycerol + (9Z)-octadecenoate + H(+). It carries out the reaction 2-(9Z-octadecenoyl)-glycerol + H2O = glycerol + (9Z)-octadecenoate + H(+). Functionally, calcium-independent membrane-associated phospholipase that catalyzes complete diacylation of phospholipids by hydrolyzing both sn-1 and sn-2 fatty acyl chains attached to the glycerol backbone (phospholipase B activity). Has dual phospholipase and lysophospholipase activities toward diacylphospholipids. Preferentially cleaves sn-2 ester bonds over sn-1 bonds. Acts as a lipase toward glycerolipid substrates. Hydrolyzes fatty acyl chains of diacylglycerols with preference for the sn-2 position and of triacylglycerols with not positional selectivity. May also hydrolyze long chain retinyl esters such as retinyl palmitate. May contribute to digestion of dietary phospholipids, glycerolipids and retinoids, facilitating lipid absorption at the brush border. The sequence is that of Phospholipase B1, membrane-associated (PLB1) from Homo sapiens (Human).